Reading from the N-terminus, the 116-residue chain is MHTSEMLKHVYDINLSYLLLAQRLISQDKPSAMFRLGISEEMATTLGGLTLPQMVKLAETNQLVCQFRFDSHQTITRLTQDSRVDDLQQIHTGILLSTRLLTEVSQTDEVARKKRA.

The protein belongs to the FlhD family. Homodimer; disulfide-linked. Forms a heterohexamer composed of two FlhC and four FlhD subunits. Each FlhC binds a FlhD dimer, forming a heterotrimer, and a hexamer assembles by dimerization of two heterotrimers.

It localises to the cytoplasm. Its function is as follows. Functions in complex with FlhC as a master transcriptional regulator that regulates transcription of several flagellar and non-flagellar operons by binding to their promoter region. Activates expression of class 2 flagellar genes, including fliA, which is a flagellum-specific sigma factor that turns on the class 3 genes. Also regulates genes whose products function in a variety of physiological pathways. The sequence is that of Flagellar transcriptional regulator FlhD from Enterobacter sp. (strain 22).